The chain runs to 507 residues: ATP synthase subunit alpha, chloroplastic (507 aa).

An ATP-binding site is contributed by 170–177 (IGDRQTGK).

This sequence belongs to the ATPase alpha/beta chains family. F-type ATPases have 2 components, CF(1) - the catalytic core - and CF(0) - the membrane proton channel. CF(1) has five subunits: alpha(3), beta(3), gamma(1), delta(1), epsilon(1). CF(0) has four main subunits: a, b, b' and c.

Its subcellular location is the plastid. The protein localises to the chloroplast thylakoid membrane. It catalyses the reaction ATP + H2O + 4 H(+)(in) = ADP + phosphate + 5 H(+)(out). Produces ATP from ADP in the presence of a proton gradient across the membrane. The alpha chain is a regulatory subunit. This Adiantum capillus-veneris (Maidenhair fern) protein is ATP synthase subunit alpha, chloroplastic.